We begin with the raw amino-acid sequence, 772 residues long: Endoplasmic reticulum membrane sensor NFE2L1 (772 aa).

A helical; Signal-anchor for type II membrane protein transmembrane segment spans residues 7–24 (YFTEGLIQFTILLSLIGV). The tract at residues 191–199 (IFDYSHRQK) is cholesterol recognition/amino acid consensus (CRAC) region. Over residues 198 to 216 (QKESEVDKELSDGRERGDG) the composition is skewed to basic and acidic residues. A disordered region spans residues 198-223 (QKESEVDKELSDGRERGDGWRSAGGQ). 8 N-linked (GlcNAc...) asparagine glycosylation sites follow: Asn332, Asn340, Asn362, Asn402, Asn407, Asn414, Asn425, and Asn429. The tract at residues 472–531 (EEEFDSDSGLSLDSGHSPASLSSSEASSSSSSSSSSSSSSSSSSSSFSEEGAVGYSSDSE) is disordered. Residues 478–519 (DSGLSLDSGHSPASLSSSEASSSSSSSSSSSSSSSSSSSSFS) show a composition bias toward low complexity. N-linked (GlcNAc...) asparagine glycosylation occurs at Asn574. Residues 581–613 (PGTLDPEEPKLPSVGKKSSKEKPSEFLDKQMSR) are disordered. The span at 598–613 (SSKEKPSEFLDKQMSR) shows a compositional bias: basic and acidic residues. Residues 654–717 (LIRDIRRRGK…RQMKQKVQNL (64 aa)) enclose the bZIP domain. Residues 656 to 675 (RDIRRRGKNKMAAQNCRKRK) form a basic motif region. Residues 682 to 696 (LERDVEDLQRDKSKL) form a leucine-zipper region. The short motif at 761–768 (RRQERKQK) is the Nuclear localization signal element.

This sequence belongs to the bZIP family. CNC subfamily. In terms of assembly, interacts (via the bZIP domain) with small MAF protein (MAFF, MAFG or MAFK); required for binding to antioxidant response elements (AREs) on DNA. Cleaved at Leu-104 following retrotranslocation, releasing the protein from the endoplasmic reticulum membrane and forming the transcription factor NRF1 that translocates into the nucleus.

It is found in the endoplasmic reticulum membrane. Its subcellular location is the nucleus. Its function is as follows. Endoplasmic reticulum membrane sensor that translocates into the nucleus in response to various stresses to act as a transcription factor. Constitutes a precursor of the transcription factor NRF1. Able to detect various cellular stresses, such as cholesterol excess, oxidative stress or proteasome inhibition. In response to stress, it is released from the endoplasmic reticulum membrane following cleavage and translocates into the nucleus to form the transcription factor NRF1. Acts as a key sensor of cholesterol excess: in excess cholesterol conditions, the endoplasmic reticulum membrane form of the protein directly binds cholesterol via its CRAC motif, preventing cleavage and release of the transcription factor NRF1, thereby allowing expression of genes promoting cholesterol removal. Involved in proteasome homeostasis: in response to proteasome inhibition, it is released from the endoplasmic reticulum membrane, translocates to the nucleus and activates expression of genes encoding proteasome subunits. In terms of biological role, CNC-type bZIP family transcription factor that translocates to the nucleus and regulates expression of target genes in response to various stresses. Heterodimerizes with small-Maf proteins (MAFF, MAFG or MAFK) and binds DNA motifs including the antioxidant response elements (AREs), which regulate expression of genes involved in oxidative stress response. Activates or represses expression of target genes, depending on the context. Plays a key role in cholesterol homeostasis by acting as a sensor of cholesterol excess: in low cholesterol conditions, translocates into the nucleus and represses expression of genes involved in defense against cholesterol excess. In excess cholesterol conditions, the endoplasmic reticulum membrane form of the protein directly binds cholesterol via its CRAC motif, preventing cleavage and release of the transcription factor NRF1, thereby allowing expression of genes promoting cholesterol removal. Critical for redox balance in response to oxidative stress: acts by binding the AREs motifs on promoters and mediating activation of oxidative stress response genes. Involved in proteasome homeostasis: in response to proteasome inhibition, mediates the 'bounce-back' of proteasome subunits by translocating into the nucleus and activating expression of genes encoding proteasome subunits. The sequence is that of Endoplasmic reticulum membrane sensor NFE2L1 from Gallus gallus (Chicken).